The following is a 149-amino-acid chain: Macrodomain Ter protein (149 aa).

Belongs to the MatP family. Homodimer.

It localises to the cytoplasm. Functionally, required for spatial organization of the terminus region of the chromosome (Ter macrodomain) during the cell cycle. Prevents early segregation of duplicated Ter macrodomains during cell division. Binds specifically to matS, which is a 13 bp signature motif repeated within the Ter macrodomain. In Vibrio cholerae serotype O1 (strain ATCC 39315 / El Tor Inaba N16961), this protein is Macrodomain Ter protein.